A 317-amino-acid polypeptide reads, in one-letter code: Phosphopantothenate--cysteine ligase 1 (317 aa).

Belongs to the PPC synthetase family. In terms of assembly, homodimer.

It carries out the reaction (R)-4'-phosphopantothenate + L-cysteine + ATP = N-[(R)-4-phosphopantothenoyl]-L-cysteine + AMP + diphosphate + H(+). It participates in cofactor biosynthesis; coenzyme A biosynthesis; CoA from (R)-pantothenate: step 2/5. In terms of biological role, catalyzes the first step in the biosynthesis of coenzyme A from vitamin B5/pantothenate, where cysteine is conjugated to 4'-phosphopantothenate to form 4-phosphopantothenoylcysteine. The catalytic activity is not CTP- but ATP-dependent. The polypeptide is Phosphopantothenate--cysteine ligase 1 (PPCS1) (Arabidopsis thaliana (Mouse-ear cress)).